A 237-amino-acid polypeptide reads, in one-letter code: Small ribosomal subunit protein eS4 (237 aa).

One can recognise an S4 RNA-binding domain in the interval 37–99; the sequence is VPLLIVLRDV…REEYYRIFPD (63 aa).

It belongs to the eukaryotic ribosomal protein eS4 family.

This Natronomonas pharaonis (strain ATCC 35678 / DSM 2160 / CIP 103997 / JCM 8858 / NBRC 14720 / NCIMB 2260 / Gabara) (Halobacterium pharaonis) protein is Small ribosomal subunit protein eS4.